The primary structure comprises 351 residues: Anthranilate phosphoribosyltransferase (351 aa).

5-phospho-alpha-D-ribose 1-diphosphate is bound by residues glycine 89, glycine 92 to aspartate 93, threonine 97, asparagine 99 to threonine 102, lysine 117 to glycine 125, and serine 129. Position 89 (glycine 89) interacts with anthranilate. A Mg(2+)-binding site is contributed by serine 101. Asparagine 120 provides a ligand contact to anthranilate. Residue arginine 175 participates in anthranilate binding. Mg(2+)-binding residues include aspartate 234 and glutamate 235.

The protein belongs to the anthranilate phosphoribosyltransferase family. In terms of assembly, homodimer. It depends on Mg(2+) as a cofactor.

The enzyme catalyses N-(5-phospho-beta-D-ribosyl)anthranilate + diphosphate = 5-phospho-alpha-D-ribose 1-diphosphate + anthranilate. Its pathway is amino-acid biosynthesis; L-tryptophan biosynthesis; L-tryptophan from chorismate: step 2/5. Its function is as follows. Catalyzes the transfer of the phosphoribosyl group of 5-phosphorylribose-1-pyrophosphate (PRPP) to anthranilate to yield N-(5'-phosphoribosyl)-anthranilate (PRA). The sequence is that of Anthranilate phosphoribosyltransferase from Synechococcus sp. (strain CC9902).